The sequence spans 231 residues: GTP-binding protein RHO3 (231 aa).

23–30 (GDGACGKT) serves as a coordination point for GTP. Positions 45 to 53 (YEPTVFENY) match the Effector region motif. GTP is bound by residues 70-74 (DTAGQ) and 128-131 (LKCD). The span at 139 to 150 (SNAITPNNIQQD) shows a compositional bias: polar residues. The interval 139 to 165 (SNAITPNNIQQDNSVSNDNGNNINSTS) is disordered. Residues 151-165 (NSVSNDNGNNINSTS) show a composition bias toward low complexity. At C228 the chain carries Cysteine methyl ester. The S-farnesyl cysteine moiety is linked to residue C228. Residues 229 to 231 (TIM) constitute a propeptide, removed in mature form.

Belongs to the small GTPase superfamily. Rho family. As to quaternary structure, interacts with TOS7.

Its subcellular location is the cell membrane. With respect to regulation, activity is positively regulated by the GTPase activating protein (GAP) RGD1. Plays an important role in cell growth. Required to keep the uninucleated state. Modulates morphogenesis during bud growth via directing organization of the actin cytoskeleton and the position of the secretory machinery for exocytosis. The sequence is that of GTP-binding protein RHO3 from Saccharomyces cerevisiae (strain ATCC 204508 / S288c) (Baker's yeast).